We begin with the raw amino-acid sequence, 907 residues long: Probable ubiquitin-conjugating enzyme E2 24 (907 aa).

Disordered regions lie at residues 1 to 23 (MEMS…EHEE) and 485 to 509 (SSTV…EASS). Positions 495–509 (QDLSQKISQSDEASS) are enriched in polar residues. A UBC core domain is found at 662 to 822 (SWVKKVQQEW…AFLITCKSMI (161 aa)). Cysteine 748 serves as the catalytic Glycyl thioester intermediate.

This sequence belongs to the ubiquitin-conjugating enzyme family. Interacts with PHO1. Interacts with NLA. Expressed in the vascular tissues of cotyledons, leaves, roots, sepals, filaments, anthers and junctions between the inflorescence stems and siliques.

Its subcellular location is the golgi apparatus membrane. The protein resides in the endoplasmic reticulum membrane. The catalysed reaction is S-ubiquitinyl-[E1 ubiquitin-activating enzyme]-L-cysteine + [E2 ubiquitin-conjugating enzyme]-L-cysteine = [E1 ubiquitin-activating enzyme]-L-cysteine + S-ubiquitinyl-[E2 ubiquitin-conjugating enzyme]-L-cysteine.. The protein operates within protein modification; protein ubiquitination. E2 ubiquitin-protein ligase that mediates E1-dependent protein ubiquitination. Mediates PHO1 degradation through multivesicular body-mediated vacuolar proteolysis in response to inorganic phosphate (Pi) availability. Negatively regulates the protein abundance of PHF1 and PHT1s under Pi-sufficient conditions by facilitating the degradation of PHT1 proteins at the endomembrane. Functions cooperatively with NLA to regulate the abundance of the inorganic phosphate (Pi) transporters PHT1-1, PHT1-2 and PHT1-3 in different subcellular compartments. Regulates Pi homeostasis by mediating, cooperatively with NLA, polyubiquitination of PHT1-4 and its targeting for degradation. This Arabidopsis thaliana (Mouse-ear cress) protein is Probable ubiquitin-conjugating enzyme E2 24.